A 527-amino-acid polypeptide reads, in one-letter code: Pyruvate kinase 2, cytosolic (527 aa).

Arg58 provides a ligand contact to substrate. Residues Asp60, Ser62, Asp92, and Thr93 each coordinate K(+). 60–63 (DFSW) is an ATP binding site. Lys256 is a substrate binding site. Glu258 provides a ligand contact to Mg(2+). 3 residues coordinate substrate: Gly281, Asn282, and Thr313. Residue Asn282 coordinates Mg(2+).

The protein belongs to the pyruvate kinase family. In terms of assembly, homotetramer. It depends on Mg(2+) as a cofactor. The cofactor is K(+).

The protein resides in the cytoplasm. It is found in the cytosol. The enzyme catalyses pyruvate + ATP = phosphoenolpyruvate + ADP + H(+). Its pathway is carbohydrate degradation; glycolysis; pyruvate from D-glyceraldehyde 3-phosphate: step 5/5. Its function is as follows. Key regulatory enzyme of the glycolytic pathway that catalyzes the final step of glycolysis, converting ADP and phosphoenolpyruvate (PEP) to ATP and pyruvate by essentially irreversible transphosphorylation. This is Pyruvate kinase 2, cytosolic from Oryza sativa subsp. indica (Rice).